A 155-amino-acid polypeptide reads, in one-letter code: Protein FAM201A (155 aa).

The disordered stretch occupies residues 130 to 155 (QDQGCGQHRPHSPRLVDIALPGGGWT).

This is Protein FAM201A (FAM201A) from Homo sapiens (Human).